Here is a 351-residue protein sequence, read N- to C-terminus: Foldase protein PrsA 1 (351 aa).

Positions Met1–Ala22 are cleaved as a signal peptide. Residue Cys23 is the site of N-palmitoyl cysteine attachment. A lipid anchor (S-diacylglycerol cysteine) is attached at Cys23. Residues Thr145–Lys240 enclose the PpiC domain. Low complexity-rich tracts occupy residues Lys303–Ser317 and Glu326–Gln351. The disordered stretch occupies residues Lys303–Gln351.

Belongs to the PrsA family.

It localises to the cell membrane. The enzyme catalyses [protein]-peptidylproline (omega=180) = [protein]-peptidylproline (omega=0). Plays a major role in protein secretion by helping the post-translocational extracellular folding of several secreted proteins. In Streptococcus pyogenes serotype M1, this protein is Foldase protein PrsA 1 (prsA1).